A 542-amino-acid polypeptide reads, in one-letter code: Peptide chain release factor 3 (542 aa).

The region spanning 14 to 283 (DKRRNFAIIS…AFLEYALKPG (270 aa)) is the tr-type G domain. Residues 23–30 (SHPDAGKT), 91–95 (DTPGH), and 145–148 (NKMD) contribute to the GTP site.

The protein belongs to the TRAFAC class translation factor GTPase superfamily. Classic translation factor GTPase family. PrfC subfamily.

It is found in the cytoplasm. Increases the formation of ribosomal termination complexes and stimulates activities of RF-1 and RF-2. It binds guanine nucleotides and has strong preference for UGA stop codons. It may interact directly with the ribosome. The stimulation of RF-1 and RF-2 is significantly reduced by GTP and GDP, but not by GMP. This chain is Peptide chain release factor 3, found in Trichodesmium erythraeum (strain IMS101).